The following is a 317-amino-acid chain: Putative GTPase PH0274 (317 aa).

GTP is bound by residues 54 to 62 (GPPGAGKST), aspartate 196, and 231 to 233 (VGT).

The protein belongs to the SIMIBI class G3E GTPase family. ArgK/MeaB subfamily.

In terms of biological role, may have GTPase activity. May also bind and hydrolyze ATP. May function as chaperone. The protein is Putative GTPase PH0274 of Pyrococcus horikoshii (strain ATCC 700860 / DSM 12428 / JCM 9974 / NBRC 100139 / OT-3).